The sequence spans 349 residues: Phosphoribosylformylglycinamidine cyclo-ligase (349 aa).

Belongs to the AIR synthase family.

Its subcellular location is the cytoplasm. It carries out the reaction 2-formamido-N(1)-(5-O-phospho-beta-D-ribosyl)acetamidine + ATP = 5-amino-1-(5-phospho-beta-D-ribosyl)imidazole + ADP + phosphate + H(+). Its pathway is purine metabolism; IMP biosynthesis via de novo pathway; 5-amino-1-(5-phospho-D-ribosyl)imidazole from N(2)-formyl-N(1)-(5-phospho-D-ribosyl)glycinamide: step 2/2. The sequence is that of Phosphoribosylformylglycinamidine cyclo-ligase from Methanococcus vannielii (strain ATCC 35089 / DSM 1224 / JCM 13029 / OCM 148 / SB).